Here is a 173-residue protein sequence, read N- to C-terminus: Shikimate kinase 1 (173 aa).

ATP is bound at residue 14–19 (GAGKST). Serine 18 contacts Mg(2+). Substrate is bound by residues aspartate 36, arginine 60, and glycine 82. Residue arginine 120 participates in ATP binding. A substrate-binding site is contributed by arginine 140. Position 157 (glutamine 157) interacts with ATP.

Belongs to the shikimate kinase family. In terms of assembly, monomer. Mg(2+) is required as a cofactor.

The protein resides in the cytoplasm. It carries out the reaction shikimate + ATP = 3-phosphoshikimate + ADP + H(+). The protein operates within metabolic intermediate biosynthesis; chorismate biosynthesis; chorismate from D-erythrose 4-phosphate and phosphoenolpyruvate: step 5/7. Catalyzes the specific phosphorylation of the 3-hydroxyl group of shikimic acid using ATP as a cosubstrate. The protein is Shikimate kinase 1 of Salmonella typhimurium (strain LT2 / SGSC1412 / ATCC 700720).